A 348-amino-acid chain; its full sequence is Endoglucanase-6B (348 aa).

The substrate site is built by Trp-52 and Ser-54. Catalysis depends on proton donor residues Asp-92 and Asp-139. Positions 183, 186, 222, 282, 310, and 314 each coordinate substrate. Positions 222–241 (NYNPYSTSNPPPYTSGSPSP) are enriched in low complexity. The segment at 222-244 (NYNPYSTSNPPPYTSGSPSPDES) is disordered.

The protein belongs to the glycosyl hydrolase 6 (cellulase B) family. As to quaternary structure, monomer.

It carries out the reaction Endohydrolysis of (1-&gt;4)-beta-D-glucosidic linkages in cellulose, lichenin and cereal beta-D-glucans.. Its function is as follows. Plays a central role in the recycling of plant biomass. The biological conversion of cellulose to glucose generally requires three types of hydrolytic enzymes: (1) Endoglucanases which cut internal beta-1,4-glucosidic bonds; (2) Exocellobiohydrolases that cut the disaccharide cellobiose from the non-reducing end of the cellulose polymer chain; (3) Beta-1,4-glucosidases which hydrolyze the cellobiose and other short cello-oligosaccharides to glucose. The sequence is that of Endoglucanase-6B from Humicola insolens (Soft-rot fungus).